The sequence spans 159 residues: Probable cyclic pyranopterin monophosphate synthase (159 aa).

Substrate contacts are provided by residues 74-76 and 110-111; these read MCH and ME. Asp125 is a catalytic residue.

The protein belongs to the MoaC family. As to quaternary structure, homohexamer; trimer of dimers.

It carries out the reaction (8S)-3',8-cyclo-7,8-dihydroguanosine 5'-triphosphate = cyclic pyranopterin phosphate + diphosphate. Its pathway is cofactor biosynthesis; molybdopterin biosynthesis. In terms of biological role, catalyzes the conversion of (8S)-3',8-cyclo-7,8-dihydroguanosine 5'-triphosphate to cyclic pyranopterin monophosphate (cPMP). The chain is Probable cyclic pyranopterin monophosphate synthase from Methanococcoides burtonii (strain DSM 6242 / NBRC 107633 / OCM 468 / ACE-M).